Here is a 157-residue protein sequence, read N- to C-terminus: DNA gyrase inhibitor (157 aa).

The protein belongs to the DNA gyrase inhibitor family. Interacts with DNA gyrase.

The protein resides in the cytoplasm. In terms of biological role, inhibits the supercoiling activity of DNA gyrase. Acts by inhibiting DNA gyrase at an early step, prior to (or at the step of) binding of DNA by the gyrase. It protects cells against toxins that target DNA gyrase, by inhibiting activity of these toxins and reducing the formation of lethal double-strand breaks in the cell. The chain is DNA gyrase inhibitor from Cronobacter sakazakii (strain ATCC BAA-894) (Enterobacter sakazakii).